A 384-amino-acid chain; its full sequence is Glutamate 5-kinase (384 aa).

Lys-24 lines the ATP pocket. Substrate is bound by residues Ser-64, Asp-149, and Asn-161. Residues 181–182 (TD) and 223–229 (TGGMRTK) contribute to the ATP site. The PUA domain occupies 288–370 (PGAILIDAGA…RDIQTLLGYT (83 aa)).

This sequence belongs to the glutamate 5-kinase family.

Its subcellular location is the cytoplasm. The enzyme catalyses L-glutamate + ATP = L-glutamyl 5-phosphate + ADP. It participates in amino-acid biosynthesis; L-proline biosynthesis; L-glutamate 5-semialdehyde from L-glutamate: step 1/2. Its function is as follows. Catalyzes the transfer of a phosphate group to glutamate to form L-glutamate 5-phosphate. The chain is Glutamate 5-kinase from Xylella fastidiosa (strain M12).